The chain runs to 227 residues: Cytochrome c oxidase subunit 2 (227 aa).

The Mitochondrial intermembrane portion of the chain corresponds to 1–14; sequence MAYPFQLGLQDATS. The chain crosses the membrane as a helical span at residues 15 to 45; sequence PIMEELTNFHDHTLMIVFLISSLVLYIISLM. Residues 46–59 are Mitochondrial matrix-facing; sequence LTTKLTHTSTMDAQ. Residues 60-87 traverse the membrane as a helical segment; that stretch reads EVETIWTILPAVILILIALPSLRILYMM. Residues 88-227 are Mitochondrial intermembrane-facing; it reads DEINNPVLTV…HFENWSTSMI (140 aa). Cu cation contacts are provided by H161, C196, E198, C200, H204, and M207. E198 serves as a coordination point for Mg(2+).

The protein belongs to the cytochrome c oxidase subunit 2 family. Component of the cytochrome c oxidase (complex IV, CIV), a multisubunit enzyme composed of 14 subunits. The complex is composed of a catalytic core of 3 subunits MT-CO1, MT-CO2 and MT-CO3, encoded in the mitochondrial DNA, and 11 supernumerary subunits COX4I, COX5A, COX5B, COX6A, COX6B, COX6C, COX7A, COX7B, COX7C, COX8 and NDUFA4, which are encoded in the nuclear genome. The complex exists as a monomer or a dimer and forms supercomplexes (SCs) in the inner mitochondrial membrane with NADH-ubiquinone oxidoreductase (complex I, CI) and ubiquinol-cytochrome c oxidoreductase (cytochrome b-c1 complex, complex III, CIII), resulting in different assemblies (supercomplex SCI(1)III(2)IV(1) and megacomplex MCI(2)III(2)IV(2)). Found in a complex with TMEM177, COA6, COX18, COX20, SCO1 and SCO2. Interacts with TMEM177 in a COX20-dependent manner. Interacts with COX20. Interacts with COX16. The cofactor is Cu cation.

The protein localises to the mitochondrion inner membrane. It carries out the reaction 4 Fe(II)-[cytochrome c] + O2 + 8 H(+)(in) = 4 Fe(III)-[cytochrome c] + 2 H2O + 4 H(+)(out). Component of the cytochrome c oxidase, the last enzyme in the mitochondrial electron transport chain which drives oxidative phosphorylation. The respiratory chain contains 3 multisubunit complexes succinate dehydrogenase (complex II, CII), ubiquinol-cytochrome c oxidoreductase (cytochrome b-c1 complex, complex III, CIII) and cytochrome c oxidase (complex IV, CIV), that cooperate to transfer electrons derived from NADH and succinate to molecular oxygen, creating an electrochemical gradient over the inner membrane that drives transmembrane transport and the ATP synthase. Cytochrome c oxidase is the component of the respiratory chain that catalyzes the reduction of oxygen to water. Electrons originating from reduced cytochrome c in the intermembrane space (IMS) are transferred via the dinuclear copper A center (CU(A)) of subunit 2 and heme A of subunit 1 to the active site in subunit 1, a binuclear center (BNC) formed by heme A3 and copper B (CU(B)). The BNC reduces molecular oxygen to 2 water molecules using 4 electrons from cytochrome c in the IMS and 4 protons from the mitochondrial matrix. The sequence is that of Cytochrome c oxidase subunit 2 (MT-CO2) from Praomys taitae (Taita hill rat).